Here is a 240-residue protein sequence, read N- to C-terminus: Heme oxygenase 1 (240 aa).

The heme b site is built by arginine 10, histidine 17, tyrosine 125, lysine 168, and arginine 172.

It belongs to the heme oxygenase family.

It catalyses the reaction heme b + 3 reduced [NADPH--hemoprotein reductase] + 3 O2 = biliverdin IXalpha + CO + Fe(2+) + 3 oxidized [NADPH--hemoprotein reductase] + 3 H2O + H(+). Catalyzes the opening of the heme ring with the release of iron. Key enzyme in the synthesis of the chromophoric part of the photosynthetic antennae. The sequence is that of Heme oxygenase 1 (pbsA1) from Synechocystis sp. (strain ATCC 27184 / PCC 6803 / Kazusa).